The following is a 235-amino-acid chain: Thymidylate kinase (235 aa).

An ATP-binding site is contributed by Gly-10–Ser-17.

The protein belongs to the thymidylate kinase family.

The enzyme catalyses dTMP + ATP = dTDP + ADP. Its pathway is pyrimidine metabolism; dTTP biosynthesis. Catalyzes the conversion of dTMP to dTDP. The protein is Thymidylate kinase (TMK) of African swine fever virus (isolate Pig/Kenya/KEN-50/1950) (ASFV).